The sequence spans 188 residues: dCTP deaminase (188 aa).

Residues 111–116 (KSTYAR), 135–137 (TLE), Q156, Y170, and Q180 contribute to the dCTP site. The active-site Proton donor/acceptor is E137.

The protein belongs to the dCTP deaminase family. In terms of assembly, homotrimer.

It carries out the reaction dCTP + H2O + H(+) = dUTP + NH4(+). It functions in the pathway pyrimidine metabolism; dUMP biosynthesis; dUMP from dCTP (dUTP route): step 1/2. Functionally, catalyzes the deamination of dCTP to dUTP. This Thiobacillus denitrificans (strain ATCC 25259 / T1) protein is dCTP deaminase.